A 186-amino-acid chain; its full sequence is MVENGSRVVMEARDIRSALERLAREIVEQPVDPNGLALVGIHTGGVFLAKRLETLISKKLKHSIPVGTLDITLYRDDWTRLHTQPVVRATNLPFPMDDRDVVLVDDVLYTGRTIRAALDALIDYGRPKRVQVAALVDRGHRELPICGQFIGIELKTRSDEQVNVLLKEKDGVDRVVIEQAAQARKA.

Residues 101 to 113 carry the PRPP-binding motif; sequence VVLVDDVLYTGRT.

This sequence belongs to the purine/pyrimidine phosphoribosyltransferase family. PyrR subfamily.

The enzyme catalyses UMP + diphosphate = 5-phospho-alpha-D-ribose 1-diphosphate + uracil. Its function is as follows. Regulates the transcription of the pyrimidine nucleotide (pyr) operon in response to exogenous pyrimidines. Functionally, also displays a weak uracil phosphoribosyltransferase activity which is not physiologically significant. The polypeptide is Bifunctional protein PyrR (Syntrophobacter fumaroxidans (strain DSM 10017 / MPOB)).